A 117-amino-acid polypeptide reads, in one-letter code: Large ribosomal subunit protein uL18 (117 aa).

This sequence belongs to the universal ribosomal protein uL18 family. Part of the 50S ribosomal subunit; part of the 5S rRNA/L5/L18/L25 subcomplex. Contacts the 5S and 23S rRNAs.

Functionally, this is one of the proteins that bind and probably mediate the attachment of the 5S RNA into the large ribosomal subunit, where it forms part of the central protuberance. The protein is Large ribosomal subunit protein uL18 of Enterobacter sp. (strain 638).